A 48-amino-acid polypeptide reads, in one-letter code: MAKKVGLACDICGARDYTTMKKEDVSIRLELKKFCRRCNAHTIHKEAK.

It belongs to the bacterial ribosomal protein bL33 family.

In Exiguobacterium sibiricum (strain DSM 17290 / CCUG 55495 / CIP 109462 / JCM 13490 / 255-15), this protein is Large ribosomal subunit protein bL33A.